The primary structure comprises 126 residues: Aspartate 1-decarboxylase (126 aa).

The active-site Schiff-base intermediate with substrate; via pyruvic acid is the Ser25. Ser25 bears the Pyruvic acid (Ser) mark. Thr57 is a binding site for substrate. Tyr58 acts as the Proton donor in catalysis. 73-75 (GAA) provides a ligand contact to substrate.

It belongs to the PanD family. As to quaternary structure, heterooctamer of four alpha and four beta subunits. The cofactor is pyruvate. Is synthesized initially as an inactive proenzyme, which is activated by self-cleavage at a specific serine bond to produce a beta-subunit with a hydroxyl group at its C-terminus and an alpha-subunit with a pyruvoyl group at its N-terminus.

It is found in the cytoplasm. The catalysed reaction is L-aspartate + H(+) = beta-alanine + CO2. Its pathway is cofactor biosynthesis; (R)-pantothenate biosynthesis; beta-alanine from L-aspartate: step 1/1. Its function is as follows. Catalyzes the pyruvoyl-dependent decarboxylation of aspartate to produce beta-alanine. The polypeptide is Aspartate 1-decarboxylase (Sodalis glossinidius (strain morsitans)).